The chain runs to 357 residues: Probable cinnamyl alcohol dehydrogenase 7/8 (357 aa).

Cys47 is a Zn(2+) binding site. NADP(+) is bound at residue Ser49. The Zn(2+) site is built by His69, Glu70, Cys100, Cys103, Cys106, Cys114, and Cys163. NADP(+)-binding positions include Thr167, 188 to 193, 211 to 216, Thr251, Gly275, and 298 to 300; these read GLGGVG, SSSDKK, and SFI.

It belongs to the zinc-containing alcohol dehydrogenase family. As to quaternary structure, homodimer. Zn(2+) serves as cofactor.

The catalysed reaction is (E)-cinnamyl alcohol + NADP(+) = (E)-cinnamaldehyde + NADPH + H(+). It carries out the reaction (E)-coniferol + NADP(+) = (E)-coniferaldehyde + NADPH + H(+). The enzyme catalyses (E)-sinapyl alcohol + NADP(+) = (E)-sinapaldehyde + NADPH + H(+). It catalyses the reaction (E)-4-coumaroyl alcohol + NADP(+) = (E)-4-coumaraldehyde + NADPH + H(+). The catalysed reaction is (E)-caffeyl alcohol + NADP(+) = (E)-caffeyl aldehyde + NADPH + H(+). Its pathway is aromatic compound metabolism; phenylpropanoid biosynthesis. In terms of biological role, involved in lignin biosynthesis. Catalyzes the final step specific for the production of lignin monomers. Catalyzes the NADPH-dependent reduction of coniferaldehyde, 5-hydroxyconiferaldehyde, sinapaldehyde, 4-coumaraldehyde and caffeyl aldehyde to their respective alcohols. The protein is Probable cinnamyl alcohol dehydrogenase 7/8 (CAD7) of Picea abies (Norway spruce).